Reading from the N-terminus, the 433-residue chain is MLSYKKVLIVGRPNVGKSALFNRILDTKRSITENTYGVTRDLVEEVCKVGSFKFKLIDTGGFTILKDEISKIVVQKVLSSLEKVDLILLVLDVNEILLEDYQIIERLRKYSNKVILVLNKVDAKDKEFLAHEFHNLGFKRCFLVSAVHCRGIAKLRDFLKVEVGEANIEDEVNIKVGIIGKPNSGKSTLINYLSGNEISIVSDKPGTTRDFIKTKLTRNGKVFEIIDTAGIRRRARVNEIVEYYSVNRALKVIDMVDIVFLLIDVKEELTSQDKKIAHYVTKKGKGIIIVFSKWDLVKESKGYFEALKSRVKFFFPVLNFAPIFRISVHKKIGLDSLFKEAFKLKDQLEFKTSTPDLNKMLNLWIKDYHLNVSHKIKYITQVSANPVRFILFANKIKNFPNSYYNYLVNNLRKIGYNNIPILVELREKIRDLK.

EngA-type G domains follow at residues 5–167 (KKVL…GEAN) and 174–349 (IKVG…DQLE). GTP-binding positions include 11–18 (GRPNVGKS), 58–62 (DTGGF), 119–122 (NKVD), 180–187 (GKPNSGKS), 227–231 (DTAGI), and 292–295 (SKWD). The KH-like domain occupies 350–429 (FKTSTPDLNK…PILVELREKI (80 aa)).

It belongs to the TRAFAC class TrmE-Era-EngA-EngB-Septin-like GTPase superfamily. EngA (Der) GTPase family. Associates with the 50S ribosomal subunit.

In terms of biological role, GTPase that plays an essential role in the late steps of ribosome biogenesis. The polypeptide is GTPase Der (Borreliella afzelii (strain PKo) (Borrelia afzelii)).